Reading from the N-terminus, the 150-residue chain is Submaxillary gland androgen-regulated protein 2, isoform alpha (150 aa).

A signal peptide spans 1–22 (MKALYMVFVLWVLIGCFLSGEC).

Its subcellular location is the secreted. Functionally, may play a role in protection or detoxification. In Mus musculus (Mouse), this protein is Submaxillary gland androgen-regulated protein 2, isoform alpha (Smr2).